A 297-amino-acid polypeptide reads, in one-letter code: Ribonuclease H2 subunit A (297 aa).

Positions 21 to 248 (PCVLGIDEAG…ASTIVEKRCV (228 aa)) constitute an RNase H type-2 domain. A divalent metal cation is bound by residues Asp-27, Glu-28, and Asp-138.

Belongs to the RNase HII family. Eukaryotic subfamily. It depends on Mn(2+) as a cofactor. Mg(2+) is required as a cofactor.

The enzyme catalyses Endonucleolytic cleavage to 5'-phosphomonoester.. In terms of biological role, catalytic subunit of RNase HII, an endonuclease that specifically degrades the RNA of RNA:DNA hybrids. Participates in DNA replication, possibly by mediating the removal of lagging-strand Okazaki fragment RNA primers during DNA replication. Mediates the excision of single ribonucleotides from DNA:RNA duplexes. The sequence is that of Ribonuclease H2 subunit A (rnh-2) from Caenorhabditis elegans.